A 130-amino-acid chain; its full sequence is Small ribosomal subunit protein uS9 (130 aa).

The tract at residues 102–130 is disordered; it reads GFLTRDPRMKERKKYGLKKARRAPQFSKR. Residues 111–130 are compositionally biased toward basic residues; it reads KERKKYGLKKARRAPQFSKR.

The protein belongs to the universal ribosomal protein uS9 family.

This chain is Small ribosomal subunit protein uS9, found in Clostridium novyi (strain NT).